Consider the following 193-residue polypeptide: uncharacterized protein (193 aa).

Helical transmembrane passes span leucine 5–phenylalanine 25, isoleucine 63–isoleucine 83, and isoleucine 90–alanine 110.

Its subcellular location is the cell membrane. This is an uncharacterized protein from Methanocaldococcus jannaschii (strain ATCC 43067 / DSM 2661 / JAL-1 / JCM 10045 / NBRC 100440) (Methanococcus jannaschii).